Here is a 260-residue protein sequence, read N- to C-terminus: MVLIRVLANLLVLQLSYAQKSSELVIGGDECNINEHPFPVALHTARSKRFYCAGTLINQEWVLTAARCDRKNIRIILGVHSKNVPNEDQQIRVPKEKFFCLSSKTYTRWDKDIMLIRLKKPVNDSTHIVPLSLPSSPPSVGSVCRIMGWGTITTTKVTYPDVPHCANINMFDYSVCRKVYRKLPEKSRTLCAGILQGGIDSCKVDNGGPLICNGQIQGIVSWGGHPCAQPHKPALYTNVFDYTDWIQSIIAGNITATCPP.

The N-terminal stretch at 1–18 (MVLIRVLANLLVLQLSYA) is a signal peptide. Positions 19–24 (QKSSEL) are excised as a propeptide. One can recognise a Peptidase S1 domain in the interval 25 to 251 (VIGGDECNIN…YTDWIQSIIA (227 aa)). 6 disulfides stabilise this stretch: Cys-31-Cys-165, Cys-52-Cys-68, Cys-100-Cys-258, Cys-144-Cys-212, Cys-176-Cys-191, and Cys-202-Cys-227. Asn-123 carries an N-linked (GlcNAc...) asparagine glycan. An N-linked (GlcNAc...) asparagine glycan is attached at Asn-253.

It belongs to the peptidase S1 family. Snake venom subfamily. Expressed by the venom gland.

It is found in the secreted. In terms of biological role, snake venom serine protease homolog that may act in the hemostasis system of the prey. The protein is Snake venom serine protease homolog 2 of Macrovipera lebetinus (Levantine viper).